Here is a 214-residue protein sequence, read N- to C-terminus: Avenin (214 aa).

The signal sequence occupies residues 1–28 (MKIFFFLALLALVVSATFAQYAESDGSY). The tract at residues 180–214 (RGQESGVFTPKFTQTSFQPYPEGEDESSLINKASE) is disordered.

In terms of biological role, seed storage protein. The sequence is that of Avenin from Avena sativa (Oat).